Consider the following 163-residue polypeptide: Regulatory protein RecX (163 aa).

The segment at 1–21 (MSDAEDIPTGRKRRPREQTPV) is disordered.

The protein belongs to the RecX family.

The protein resides in the cytoplasm. Functionally, modulates RecA activity. The protein is Regulatory protein RecX of Stenotrophomonas maltophilia (strain R551-3).